The primary structure comprises 81 residues: uncharacterized protein (81 aa).

This is an uncharacterized protein from Synechocystis sp. (strain ATCC 27184 / PCC 6803 / Kazusa).